A 271-amino-acid chain; its full sequence is ATP synthase subunit delta (271 aa).

The protein belongs to the ATPase delta chain family. As to quaternary structure, F-type ATPases have 2 components, F(1) - the catalytic core - and F(0) - the membrane proton channel. F(1) has five subunits: alpha(3), beta(3), gamma(1), delta(1), epsilon(1). F(0) has three main subunits: a(1), b(2) and c(10-14). The alpha and beta chains form an alternating ring which encloses part of the gamma chain. F(1) is attached to F(0) by a central stalk formed by the gamma and epsilon chains, while a peripheral stalk is formed by the delta and b chains.

The protein resides in the cell membrane. In terms of biological role, f(1)F(0) ATP synthase produces ATP from ADP in the presence of a proton or sodium gradient. F-type ATPases consist of two structural domains, F(1) containing the extramembraneous catalytic core and F(0) containing the membrane proton channel, linked together by a central stalk and a peripheral stalk. During catalysis, ATP synthesis in the catalytic domain of F(1) is coupled via a rotary mechanism of the central stalk subunits to proton translocation. Its function is as follows. This protein is part of the stalk that links CF(0) to CF(1). It either transmits conformational changes from CF(0) to CF(1) or is implicated in proton conduction. This Streptomyces griseus subsp. griseus (strain JCM 4626 / CBS 651.72 / NBRC 13350 / KCC S-0626 / ISP 5235) protein is ATP synthase subunit delta.